The primary structure comprises 533 residues: Na(+)/H(+) antiporter NhaB (533 aa).

11 helical membrane-spanning segments follow: residues 10–30 (IGNF…SFLI), 67–87 (PGGL…SQVL), 96–116 (VLLL…LLLF), 131–165 (VSLM…FYSI), 209–229 (LLMH…VGEP), 247–267 (IRMS…CFLV), 310–330 (AFVG…VGLI), 355–375 (EEAL…AVII), 396–416 (LVIF…VFVG), 454–474 (ATPN…APLI), and 481–501 (MVWM…MAIE).

The protein belongs to the NhaB Na(+)/H(+) (TC 2.A.34) antiporter family.

The protein localises to the cell inner membrane. It catalyses the reaction 2 Na(+)(in) + 3 H(+)(out) = 2 Na(+)(out) + 3 H(+)(in). Its function is as follows. Na(+)/H(+) antiporter that extrudes sodium in exchange for external protons. The protein is Na(+)/H(+) antiporter NhaB of Shewanella sp. (strain MR-4).